The chain runs to 542 residues: CTP synthase (542 aa).

Residues 1-265 (MTRYVFITGG…DREILAHFQM (265 aa)) form an amidoligase domain region. Serine 13 contacts CTP. A UTP-binding site is contributed by serine 13. Residues 14–19 (SLGKGL) and aspartate 71 each bind ATP. Mg(2+)-binding residues include aspartate 71 and glutamate 139. Residues 146-148 (DIE), 186-191 (KTKPTQ), and lysine 222 each bind CTP. UTP contacts are provided by residues 186–191 (KTKPTQ) and lysine 222. 238–240 (RDV) is a binding site for ATP. In terms of domain architecture, Glutamine amidotransferase type-1 spans 291-541 (TIAIVGKYTG…IAAAIEQSRL (251 aa)). Glycine 353 is a binding site for L-glutamine. Catalysis depends on cysteine 380, which acts as the Nucleophile; for glutamine hydrolysis. L-glutamine-binding positions include 381-384 (FGMQ), glutamate 404, and arginine 469. Catalysis depends on residues histidine 514 and glutamate 516.

This sequence belongs to the CTP synthase family. In terms of assembly, homotetramer.

It catalyses the reaction UTP + L-glutamine + ATP + H2O = CTP + L-glutamate + ADP + phosphate + 2 H(+). The catalysed reaction is L-glutamine + H2O = L-glutamate + NH4(+). The enzyme catalyses UTP + NH4(+) + ATP = CTP + ADP + phosphate + 2 H(+). Its pathway is pyrimidine metabolism; CTP biosynthesis via de novo pathway; CTP from UDP: step 2/2. With respect to regulation, allosterically activated by GTP, when glutamine is the substrate; GTP has no effect on the reaction when ammonia is the substrate. The allosteric effector GTP functions by stabilizing the protein conformation that binds the tetrahedral intermediate(s) formed during glutamine hydrolysis. Inhibited by the product CTP, via allosteric rather than competitive inhibition. Functionally, catalyzes the ATP-dependent amination of UTP to CTP with either L-glutamine or ammonia as the source of nitrogen. Regulates intracellular CTP levels through interactions with the four ribonucleotide triphosphates. In Methylorubrum populi (strain ATCC BAA-705 / NCIMB 13946 / BJ001) (Methylobacterium populi), this protein is CTP synthase.